Reading from the N-terminus, the 358-residue chain is 3-isopropylmalate dehydrogenase (358 aa).

Residue 79-92 participates in NAD(+) binding; it reads GPKWEHLPPDEQPE. Substrate is bound by residues Arg100, Arg110, Arg139, and Asp227. Residues Asp227, Asp251, and Asp255 each contribute to the Mg(2+) site. 285–297 contacts NAD(+); the sequence is GSAPDIAGKGVAN.

Belongs to the isocitrate and isopropylmalate dehydrogenases family. LeuB type 1 subfamily. In terms of assembly, homodimer. It depends on Mg(2+) as a cofactor. Requires Mn(2+) as cofactor.

It is found in the cytoplasm. The enzyme catalyses (2R,3S)-3-isopropylmalate + NAD(+) = 4-methyl-2-oxopentanoate + CO2 + NADH. It functions in the pathway amino-acid biosynthesis; L-leucine biosynthesis; L-leucine from 3-methyl-2-oxobutanoate: step 3/4. Functionally, catalyzes the oxidation of 3-carboxy-2-hydroxy-4-methylpentanoate (3-isopropylmalate) to 3-carboxy-4-methyl-2-oxopentanoate. The product decarboxylates to 4-methyl-2 oxopentanoate. In Pseudoalteromonas translucida (strain TAC 125), this protein is 3-isopropylmalate dehydrogenase.